The chain runs to 55 residues: MAKATTIKIKLLSTADTGFFYVTTKNSRTMTDKMTKTKYDPIAKKHVEFKETKIK.

Belongs to the bacterial ribosomal protein bL33 family.

In Rhizobium etli (strain CIAT 652), this protein is Large ribosomal subunit protein bL33.